The sequence spans 365 residues: Probable caffeine synthase 2 (365 aa).

Y19 provides a ligand contact to S-adenosyl-L-homocysteine. T26 provides a ligand contact to caffeine. C62, D99, L100, S134, and F135 together coordinate S-adenosyl-L-homocysteine. Caffeine is bound by residues Y152, H155, and W156. Position 173 (N173) interacts with Mg(2+). R221 contributes to the caffeine binding site. The Mg(2+) site is built by D259, F261, and N262. Residue F317 coordinates caffeine.

Belongs to the methyltransferase superfamily. Type-7 methyltransferase family. Mg(2+) serves as cofactor.

The enzyme catalyses 7-methylxanthine + S-adenosyl-L-methionine = theobromine + S-adenosyl-L-homocysteine + H(+). It catalyses the reaction theobromine + S-adenosyl-L-methionine = caffeine + S-adenosyl-L-homocysteine + H(+). It carries out the reaction 1,7-dimethylxanthine + S-adenosyl-L-methionine = caffeine + S-adenosyl-L-homocysteine + H(+). The protein operates within alkaloid biosynthesis. Its function is as follows. May be involved in the biosynthesis of caffeine. Catalyzes the conversion of 7-methylxanthine (7mX) to theobromine and of theobromine to caffeine. Has 1-N-methylation activity. In Camellia sinensis (Tea plant), this protein is Probable caffeine synthase 2.